The chain runs to 152 residues: Alpha-amylase inhibitor BDAI-1 (152 aa).

The first 30 residues, 1 to 30 (MGAMWMKSMLLVLLLCMLMVTPMTGARSDN), serve as a signal peptide directing secretion.

This sequence belongs to the protease inhibitor I6 (cereal trypsin/alpha-amylase inhibitor) family. In terms of assembly, homodimer. In terms of processing, five disulfide bonds, which are essential for the inhibitor activity, are probably present. In terms of tissue distribution, endosperm.

It is found in the secreted. Could be involved in insect defense mechanisms. Inhibits insect-type alpha-amylase. This Hordeum vulgare (Barley) protein is Alpha-amylase inhibitor BDAI-1 (IAD1).